The primary structure comprises 74 residues: MNRFVIQLIQLYKRLLSPLLPPACRFTPTCSEYAAQAFQEYGFFRALQLSIWRILRCNPLSRGFDDPLPPNTKG.

This sequence belongs to the UPF0161 family.

It is found in the cell inner membrane. Its function is as follows. Could be involved in insertion of integral membrane proteins into the membrane. The chain is Putative membrane protein insertion efficiency factor from Leptospira interrogans serogroup Icterohaemorrhagiae serovar copenhageni (strain Fiocruz L1-130).